Reading from the N-terminus, the 474-residue chain is tRNA-2-methylthio-N(6)-dimethylallyladenosine synthase (474 aa).

Residues 3-120 (QKLHIKTWGC…LPEMINQIRG (118 aa)) enclose the MTTase N-terminal domain. [4Fe-4S] cluster-binding residues include Cys-12, Cys-49, Cys-83, Cys-157, Cys-161, and Cys-164. Residues 143-375 (RAEGPTAFVS…QQRINNQAAQ (233 aa)) form the Radical SAM core domain. The TRAM domain occupies 378 to 441 (RAMLGTEQRV…TNSLRGEVVR (64 aa)).

This sequence belongs to the methylthiotransferase family. MiaB subfamily. As to quaternary structure, monomer. It depends on [4Fe-4S] cluster as a cofactor.

The protein resides in the cytoplasm. It carries out the reaction N(6)-dimethylallyladenosine(37) in tRNA + (sulfur carrier)-SH + AH2 + 2 S-adenosyl-L-methionine = 2-methylsulfanyl-N(6)-dimethylallyladenosine(37) in tRNA + (sulfur carrier)-H + 5'-deoxyadenosine + L-methionine + A + S-adenosyl-L-homocysteine + 2 H(+). Its function is as follows. Catalyzes the methylthiolation of N6-(dimethylallyl)adenosine (i(6)A), leading to the formation of 2-methylthio-N6-(dimethylallyl)adenosine (ms(2)i(6)A) at position 37 in tRNAs that read codons beginning with uridine. The polypeptide is tRNA-2-methylthio-N(6)-dimethylallyladenosine synthase (Pasteurella multocida (strain Pm70)).